Here is a 207-residue protein sequence, read N- to C-terminus: 2,3-bisphosphoglycerate-dependent phosphoglycerate mutase (207 aa).

Substrate is bound by residues 10–17, 23–24, Arg62, 89–92, Lys100, 116–117, and 160–161; these read RHGQSEWN, TG, ERDY, RR, and GN. The Tele-phosphohistidine intermediate role is filled by His11. The active-site Proton donor/acceptor is Glu89.

The protein belongs to the phosphoglycerate mutase family. BPG-dependent PGAM subfamily. As to quaternary structure, homodimer.

The catalysed reaction is (2R)-2-phosphoglycerate = (2R)-3-phosphoglycerate. It participates in carbohydrate degradation; glycolysis; pyruvate from D-glyceraldehyde 3-phosphate: step 3/5. In terms of biological role, catalyzes the interconversion of 2-phosphoglycerate and 3-phosphoglycerate. This Bradyrhizobium sp. (strain ORS 278) protein is 2,3-bisphosphoglycerate-dependent phosphoglycerate mutase.